The chain runs to 591 residues: Cytidine monophosphate-N-acetylneuraminic acid hydroxylase (591 aa).

In terms of domain architecture, Rieske spans 16–114; the sequence is LASAEVESLK…IENDDENGVS (99 aa). 4 residues coordinate [2Fe-2S] cluster: Cys-56, His-58, Cys-77, and His-80.

This sequence belongs to the CMP-Neu5Ac hydroxylase family. The cofactor is [2Fe-2S] cluster.

The protein localises to the cytoplasm. The enzyme catalyses CMP-N-acetyl-beta-neuraminate + 2 Fe(II)-[cytochrome b5] + O2 + 2 H(+) = CMP-N-glycoloyl-beta-neuraminate + 2 Fe(III)-[cytochrome b5] + H2O. It functions in the pathway amino-sugar metabolism; N-acetylneuraminate metabolism. In terms of biological role, sialic acids are components of carbohydrate chains of glycoconjugates and are involved in cell-cell recognition and cell-pathogen interactions. Catalyzes the conversion of CMP-N-acetylneuraminic acid (CMP-Neu5Ac) into its hydroxylated derivative CMP-N-glycolylneuraminic acid (CMP-Neu5Gc), a sialic acid abundantly expressed at the surface of many cells. The chain is Cytidine monophosphate-N-acetylneuraminic acid hydroxylase (cmah) from Xenopus laevis (African clawed frog).